A 700-amino-acid chain; its full sequence is MSDQKVFARYKANEIVTDLQHFGVKKFKSNITRRKNALRKIIANLVLGNYGEMSVLFSELLKFWQIEDDLEVKRICHEYIRVIGALKPQQAREALPFIMDDFKSRDEKLQIMALRTLVLVPVKELSDQAFDCIISLVNHKSPPEQVTRTAIYALLDLDEIDHERVLGLSSILHDIVKAQSSSPEVIVAALHTLYSIHEKNANMEPFRIPLELAFDMLELLPELNEWNKATVLEVLTTSVVPQHYLDTHEMIELALPYLQQVNTYVVLNSLKFIMYLLNYVDVIKETLAEKLSNSVIALLDKPPELQFLVLRNVILLLLSRESSLLRLDISYFFIEYNDPIYIKDTKLECLYLLANKETLPRILEELEQYATDIDIQMSRKSVRAIGNLAVKLDEDSVHDCVAVLLDLLEFGVDYVVQEIISVFRNILRKYPNNFKANVTELVKHTEVVQEPESKNAMIWIITQYSDVIPNYLELFRVFSSNMFSETLEVQFSILNSAIKFFIRSPTKETEELCMDLLKGCIDHENNPDLRDKTLMYWRLLSLTKTSRISNAITFESLKSVLDGELPLIEMNTKLDPTVLEELELNIGTIVSIYLKPVSHIFRLNKTKLLPQSPILNPNKDLLPVVGNSFPPTGANRDRQNSESQSSTKSRKTAMMDDYDKPAEKINQLKGKRKSSSNNPSKLSRKPSTLLRKLSMKRPFS.

A disordered region spans residues 625–700; the sequence is VGNSFPPTGA…RKLSMKRPFS (76 aa). Residue serine 649 is modified to Phosphoserine. A Phosphothreonine modification is found at threonine 652. The span at 653–663 shows a compositional bias: basic and acidic residues; sequence AMMDDYDKPAE. Serine 683 carries the post-translational modification Phosphoserine.

Belongs to the adaptor complexes large subunit family. As to quaternary structure, adaptor protein complex 2 (AP-2) is a heterotetramer composed of two large adaptins (alpha-type subunit APL3 and beta-type subunit APL1), a medium chain (mu-type subunit APM4) and a small adaptin (sigma-type subunit APS2). Interacts with APS2.

It is found in the cell membrane. The protein localises to the membrane. It localises to the coated pit. Adaptins are components of the adaptor complexes which link clathrin to receptors in coated vesicles. Clathrin-associated protein complexes are believed to interact with the cytoplasmic tails of membrane proteins, leading to their selection and concentration. Beta adaptin is a subunit of the plasma membrane adaptor. The polypeptide is AP-2 complex subunit beta (APL1) (Saccharomyces cerevisiae (strain ATCC 204508 / S288c) (Baker's yeast)).